A 1074-amino-acid chain; its full sequence is DNA annealing helicase and endonuclease ZRANB3 (1074 aa).

A Helicase ATP-binding domain is found at 46-208 (TFALRRDGRC…FMQIEALFPQ (163 aa)). The DNA annealing helicase activity stretch occupies residues 46–481 (TFALRRDGRC…GRKEKLQAEE (436 aa)). 59–66 (DEMGLGKT) contacts ATP. Positions 157 to 160 (DESH) match the DEAH box motif. The region spanning 325 to 481 (AVKDYIKMML…GRKEKLQAEE (157 aa)) is the Helicase C-terminal domain. Positions 519-526 (QRDIRSFF) match the PIP-box motif. Phosphoserine is present on serine 566. The segment at 617-647 (FCGEGWQCAFCTYINNSVLPYCEMCENPRGG) adopts a RanBP2-type zinc-finger fold. The tract at residues 659–719 (QNKNKNEKDD…RLTPQPGDEQ (61 aa)) is disordered. Composition is skewed to basic and acidic residues over residues 662–674 (NKNEKDDSQDTSK) and 696–711 (AKSKEEISTTESEDRL). Residues 1006–1046 (PGEGHFWQVDHIKPVSGGGGQCSLDNLQTLCTVCHRERTAQ) enclose the HNH domain. An endonuclease activity region spans residues 1006–1074 (PGEGHFWQVD…SDITRFLVKK (69 aa)). The APIM motif signature appears at 1069–1073 (RFLVK).

This sequence belongs to the SNF2/RAD54 helicase family. As to quaternary structure, interacts (via PIP-box and RanBP2-type zinc finger) with PCNA (when PCNA is polyubiquitinated via 'Lys-63'-linked polyubiquitin).

Its subcellular location is the nucleus. It is found in the chromosome. In terms of biological role, DNA annealing helicase and endonuclease required to maintain genome stability at stalled or collapsed replication forks by facilitating fork restart and limiting inappropriate recombination that could occur during template switching events. Recruited to the sites of stalled DNA replication by polyubiquitinated PCNA and acts as a structure-specific endonuclease that cleaves the replication fork D-loop intermediate, generating an accessible 3'-OH group in the template of the leading strand, which is amenable to extension by DNA polymerase. In addition to endonuclease activity, also catalyzes the fork regression via annealing helicase activity in order to prevent disintegration of the replication fork and the formation of double-strand breaks. The sequence is that of DNA annealing helicase and endonuclease ZRANB3 (ZRANB3) from Bos taurus (Bovine).